Consider the following 678-residue polypeptide: DNA ligase (678 aa).

Residues 35-39, 84-85, and Glu-115 contribute to the NAD(+) site; these read DEEYD and SL. Residue Lys-117 is the N6-AMP-lysine intermediate of the active site. Residues Arg-138, Glu-172, Lys-288, and Lys-312 each contribute to the NAD(+) site. The Zn(2+) site is built by Cys-406, Cys-409, Cys-425, and Cys-430. Residues 589–678 enclose the BRCT domain; the sequence is VQSKILSNLT…IKNLRQQKLF (90 aa).

Belongs to the NAD-dependent DNA ligase family. LigA subfamily. The cofactor is Mg(2+). Mn(2+) is required as a cofactor.

The enzyme catalyses NAD(+) + (deoxyribonucleotide)n-3'-hydroxyl + 5'-phospho-(deoxyribonucleotide)m = (deoxyribonucleotide)n+m + AMP + beta-nicotinamide D-nucleotide.. Its function is as follows. DNA ligase that catalyzes the formation of phosphodiester linkages between 5'-phosphoryl and 3'-hydroxyl groups in double-stranded DNA using NAD as a coenzyme and as the energy source for the reaction. It is essential for DNA replication and repair of damaged DNA. This chain is DNA ligase, found in Pseudothermotoga lettingae (strain ATCC BAA-301 / DSM 14385 / NBRC 107922 / TMO) (Thermotoga lettingae).